The following is a 313-amino-acid chain: HTH-type transcriptional regulator CbbR (313 aa).

In terms of domain architecture, HTH lysR-type spans 1 to 61 (MRNVTFRQLR…DRTRGGMVPT (61 aa)). Positions 21-40 (INLAAEALGLTGPALTLQIQ) form a DNA-binding region, H-T-H motif.

The protein belongs to the LysR transcriptional regulatory family.

Transcriptional activator for the cbb operon for RuBisCO and other Calvin cycle genes. In Rhizobium meliloti (strain 1021) (Ensifer meliloti), this protein is HTH-type transcriptional regulator CbbR (cbbR).